A 1465-amino-acid polypeptide reads, in one-letter code: Protein clueless (1465 aa).

The disordered stretch occupies residues 1–87; the sequence is MALEIDAKNA…SNGHSENGDA (87 aa). Positions 30 to 51 are enriched in low complexity; it reads HNNNNNAPAAGEKNLVNGSSAA. The segment covering 52–61 has biased composition (basic residues); that stretch reads TKKKGKKNRN. A Phosphoserine modification is found at Ser273. The 243-residue stretch at 427-669 folds into the Clu domain; that stretch reads RAEDAFSSKL…RTFPPDVNFL (243 aa). A compositionally biased stretch (basic and acidic residues) spans 742–767; sequence AEKQEEPNEEQPEKTEEQPAEKEESK. Disordered stretches follow at residues 742–776 and 962–1021; these read AEKQ…TKSA and VSSD…SNSD. The segment covering 970–986 has biased composition (basic residues); sequence KQPRNNSGKHNKHKAAK. Low complexity-rich tracts occupy residues 987-1003 and 1010-1020; these read ASKP…ATAA and ATTSGATSSNS. TPR repeat units lie at residues 1114–1147, 1240–1273, and 1275–1308; these read AYNF…LNNV, ALID…NLKY, and GNKA…EKET. The tract at residues 1428–1465 is disordered; sequence NNNDNASETEQPKDEASAAGTPTQLTNGSEESTATVSS. Polar residues predominate over residues 1447–1465; sequence GTPTQLTNGSEESTATVSS.

It belongs to the CLU family.

The protein localises to the cytoplasm. Functionally, mRNA-binding protein involved in proper cytoplasmic distribution of mitochondria. This is Protein clueless from Drosophila virilis (Fruit fly).